Reading from the N-terminus, the 292-residue chain is Putative pyruvate, phosphate dikinase regulatory protein (292 aa).

G155–T162 is a binding site for ADP.

This sequence belongs to the pyruvate, phosphate/water dikinase regulatory protein family. PDRP subfamily.

The enzyme catalyses N(tele)-phospho-L-histidyl/L-threonyl-[pyruvate, phosphate dikinase] + ADP = N(tele)-phospho-L-histidyl/O-phospho-L-threonyl-[pyruvate, phosphate dikinase] + AMP + H(+). The catalysed reaction is N(tele)-phospho-L-histidyl/O-phospho-L-threonyl-[pyruvate, phosphate dikinase] + phosphate + H(+) = N(tele)-phospho-L-histidyl/L-threonyl-[pyruvate, phosphate dikinase] + diphosphate. Its function is as follows. Bifunctional serine/threonine kinase and phosphorylase involved in the regulation of the pyruvate, phosphate dikinase (PPDK) by catalyzing its phosphorylation/dephosphorylation. This is Putative pyruvate, phosphate dikinase regulatory protein from Acidiphilium cryptum (strain JF-5).